The following is a 612-amino-acid chain: MFRAQQNAYDDIVAKATDENLTSENWEYILDVCDKVSADESGAKDAVASMIKRLAHRNANVQLYTFELANALSQNCGPKAHRELASKSFTDALLRLANDRNTHPQVKSKILEHMEQWTEMFSSNPDFGIMEHAYMKLKSQNPNIQPPSKPTKRQITELDRQKEEEELQMALALSIKEKQSETSKQQDGSSQHVVTTSAQAEAAPSQGIPSGTTAATVSRVRALYDFQPSEPGELQFRKGDIIAVLESVYKDWWKGSLRGQVGIFPLNYVEKLSDPTQEELQREAQMEAEVFAEIKNVEKLLALLSTSSPELNVQENEEITKLYHSTLAIRPKLIELIGKYSKKKDDFTQLNEKFIKARRDYEALLEASMTHPAQSHYNRPAQPPFAYPPSGTHPGYPHHAPPQQEPQRYYTPRPSQDPQSAPHNTPGYYGAEPSTLPYPPDSQSPDFRKHTATGSMQLPQQQPSQPPQDAYSQGATTHYPPKTTYDHPQELGTSVYDSPQGNAPQAIQHSYHPAMQQELQQQQATGAEPTQRPYSPQENPPPQAPSSNPPYPVQTPQEPPQQSFAPPAPMHQPPPIPSVAPSQGAYGGGYQAYQPPTTQQHSPTSNPAAFYR.

One can recognise a VHS domain in the interval 16–145; sequence ATDENLTSEN…KLKSQNPNIQ (130 aa). One can recognise a UIM domain in the interval 162 to 181; the sequence is KEEEELQMALALSIKEKQSE. The segment at 176–212 is disordered; the sequence is KEKQSETSKQQDGSSQHVVTTSAQAEAAPSQGIPSGT. The span at 182–199 shows a compositional bias: polar residues; that stretch reads TSKQQDGSSQHVVTTSAQ. The 60-residue stretch at 215 to 274 folds into the SH3 domain; the sequence is ATVSRVRALYDFQPSEPGELQFRKGDIIAVLESVYKDWWKGSLRGQVGIFPLNYVEKLSD. Residues 372-612 form a disordered region; the sequence is PAQSHYNRPA…PTSNPAAFYR (241 aa). 2 stretches are compositionally biased toward polar residues: residues 413-423 and 491-508; these read RPSQDPQSAPH and LGTSVYDSPQGNAPQAIQ. Pro residues-rich tracts occupy residues 538-559 and 566-578; these read ENPPPQAPSSNPPYPVQTPQEP and PPAPMHQPPPIPS. The segment covering 597–612 has biased composition (polar residues); it reads TTQQHSPTSNPAAFYR.

This sequence belongs to the STAM family. Component of the ESCRT-0 complex composed of HSE1 and VPS27.

The protein resides in the endosome membrane. Its function is as follows. Component of the ESCRT-0 complex which is the sorting receptor for ubiquitinated cargo proteins at the multivesicular body (MVB). In Coccidioides immitis (strain RS) (Valley fever fungus), this protein is Class E vacuolar protein-sorting machinery protein HSE1 (HSE1).